The following is a 100-amino-acid chain: EKC/KEOPS complex subunit GON7 (100 aa).

N-acetylmethionine is present on Met-1. The interval 50–100 is disordered; sequence SPVQGEAQDRVAAAPEEALDGDDEDDAEDENNIDNRTNSDGPTAKRPKPPS. Positions 66–81 are enriched in acidic residues; the sequence is EALDGDDEDDAEDENN.

As to quaternary structure, component of the EKC/KEOPS complex composed of at least GON7, TP53RK, TPRKB, OSGEP and LAGE3; the whole complex dimerizes.

The protein localises to the nucleus. Functionally, component of the EKC/KEOPS complex that is required for the formation of a threonylcarbamoyl group on adenosine at position 37 (t(6)A37) in tRNAs that read codons beginning with adenine. The complex is probably involved in the transfer of the threonylcarbamoyl moiety of threonylcarbamoyl-AMP (TC-AMP) to the N6 group of A37. GON7 plays a supporting role to the catalytic subunit OSGEP in the complex. The chain is EKC/KEOPS complex subunit GON7 from Sus scrofa (Pig).